A 76-amino-acid chain; its full sequence is Sec-independent protein translocase protein TatA (76 aa).

The chain crosses the membrane as a helical span at residues 1–21 (MGGISITQLLIIVAIVVLLFG). Positions 45-76 (DDNKEKDAEFKSLSDDSETTAKTEKAKDKEQA) are disordered.

This sequence belongs to the TatA/E family. In terms of assembly, the Tat system comprises two distinct complexes: a TatABC complex, containing multiple copies of TatA, TatB and TatC subunits, and a separate TatA complex, containing only TatA subunits. Substrates initially bind to the TatABC complex, which probably triggers association of the separate TatA complex to form the active translocon.

The protein resides in the cell inner membrane. Functionally, part of the twin-arginine translocation (Tat) system that transports large folded proteins containing a characteristic twin-arginine motif in their signal peptide across membranes. TatA could form the protein-conducting channel of the Tat system. This Pasteurella multocida (strain Pm70) protein is Sec-independent protein translocase protein TatA.